The following is a 141-amino-acid chain: Transcription antitermination protein NusB (141 aa).

Belongs to the NusB family.

Functionally, involved in transcription antitermination. Required for transcription of ribosomal RNA (rRNA) genes. Binds specifically to the boxA antiterminator sequence of the ribosomal RNA (rrn) operons. The polypeptide is Transcription antitermination protein NusB (Neisseria gonorrhoeae (strain ATCC 700825 / FA 1090)).